The chain runs to 305 residues: uncharacterized protein (305 aa).

The tract at residues 255 to 305 (RCHRAGLRSPPRTREPLWSLGPSGGEAAGEAPGGKGPPTPVLPHARRAGAA) is disordered. Positions 276–288 (PSGGEAAGEAPGG) are enriched in gly residues.

This is an uncharacterized protein from Streptomyces fradiae (Streptomyces roseoflavus).